The following is a 348-amino-acid chain: Rhodopsin (348 aa).

Over 1–33 (TEGPFFYIPMVNTSGVVRSPYEYPQYYLVNPAA) the chain is Extracellular. A glycan (N-linked (GlcNAc...) asparagine) is linked at N12. A helical transmembrane segment spans residues 34-58 (YAILGAYMFFLIIIGFPVNFMTLYV). The Cytoplasmic segment spans residues 59–70 (TLEHKKLRTPLN). Residues 71–93 (YILLNLAVADLFMVIGGFTTTMY) form a helical membrane-spanning segment. The Extracellular portion of the chain corresponds to 94–107 (SSMHGYFVLGRLGC). Residues C107 and C184 are joined by a disulfide bond. A helical transmembrane segment spans residues 108 to 130 (NMEGFSATLGGMISLWSLAVLAI). A 'Ionic lock' involved in activated form stabilization motif is present at residues 131–133 (ERW). Residues 131–149 (ERWVVVCKPISNFRFGENH) are Cytoplasmic-facing. The helical transmembrane segment at 150-170 (AIMGVSLTWFMALACTVPPLV) threads the bilayer. Over 171–199 (GWSRYIPEGMQCSCGIDYYTRAEGFNNES) the chain is Extracellular. Residue N197 is glycosylated (N-linked (GlcNAc...) asparagine). Residues 200-221 (FVLYMFFCHFLVPLVIIFFCYG) form a helical membrane-spanning segment. The Cytoplasmic portion of the chain corresponds to 222–249 (RLLCAVKEAAAAQQESETTQRAEREVTR). The helical transmembrane segment at 250–271 (MVIIMVIGFLVCWLPYASVAWF) threads the bilayer. Topologically, residues 272-283 (IFTHQGSEFGPL) are extracellular. A helical membrane pass occupies residues 284-305 (FMTIPAFFAKSSSIYNPMIYIC). At K293 the chain carries N6-(retinylidene)lysine. The Cytoplasmic portion of the chain corresponds to 306-348 (MNKQFRNCMITTLFCGKNPFEGEEEGASSTKTEASSASSVSPA). Residue C320 is the site of S-palmitoyl cysteine attachment. Residues 327 to 348 (GEEEGASSTKTEASSASSVSPA) form a disordered region. Residues 332–348 (ASSTKTEASSASSVSPA) are compositionally biased toward low complexity.

Belongs to the G-protein coupled receptor 1 family. Opsin subfamily. Post-translationally, phosphorylated on some or all of the serine and threonine residues present in the C-terminal region. Contains one covalently linked retinal chromophore.

It localises to the membrane. The protein localises to the cell projection. Its subcellular location is the cilium. The protein resides in the photoreceptor outer segment. In terms of biological role, photoreceptor required for image-forming vision at low light intensity. While most salt water fish species use retinal as chromophore, most freshwater fish use 3-dehydroretinal, or a mixture of retinal and 3-dehydroretinal. Light-induced isomerization of 11-cis to all-trans retinal triggers a conformational change that activates signaling via G-proteins. Subsequent receptor phosphorylation mediates displacement of the bound G-protein alpha subunit by arrestin and terminates signaling. The polypeptide is Rhodopsin (rho) (Sargocentron punctatissimum (Speckled squirrelfish)).